The sequence spans 108 residues: Ig kappa chain V-V region HP 123E6 (108 aa).

A framework-1 region spans residues 1–23 (DIQMTQSTSSLSASLGDRVTISC). C23 and C88 are disulfide-bonded. The tract at residues 24 to 34 (RASQDISNYLN) is complementarity-determining-1. Residues 35–49 (WYQQKPDGTVKLLIY) form a framework-2 region. The segment at 50–56 (YTSRLHS) is complementarity-determining-2. The segment at 57–88 (GVPSRFSGSGSGTDYSLTISNLEQEDIATYFC) is framework-3. A complementarity-determining-3 region spans residues 89-97 (QQGYMLPRT). The segment at 98 to 108 (FGGGTKLEIKR) is framework-4.

This Mus musculus (Mouse) protein is Ig kappa chain V-V region HP 123E6.